We begin with the raw amino-acid sequence, 1096 residues long: Carbamoyl phosphate synthase large chain (1096 aa).

The carboxyphosphate synthetic domain stretch occupies residues 1–402 (MPKRDDINSV…ALQKALRSLE (402 aa)). The ATP site is built by arginine 129, arginine 169, glycine 175, glycine 176, glutamate 208, isoleucine 210, glutamate 215, glycine 241, valine 242, histidine 243, glutamine 285, and glutamate 299. One can recognise an ATP-grasp 1 domain in the interval 133 to 328 (KDLVIESGAD…IAKIAAKLAI (196 aa)). Mg(2+) contacts are provided by glutamine 285, glutamate 299, and asparagine 301. Mn(2+)-binding residues include glutamine 285, glutamate 299, and asparagine 301. Residues 403 to 547 (KRGSSFHWGA…YSSYDSETEI (145 aa)) are oligomerization domain. A carbamoyl phosphate synthetic domain region spans residues 548-950 (VPSDRRKVII…AFAKSQEAAF (403 aa)). Residues 676–870 (SGILDAAGLV…LAKAASLVMV (195 aa)) enclose the ATP-grasp 2 domain. The ATP site is built by arginine 712, arginine 754, leucine 756, glutamate 761, glycine 786, isoleucine 787, histidine 788, serine 789, glutamine 829, and glutamate 841. Mg(2+) contacts are provided by glutamine 829, glutamate 841, and asparagine 843. Mn(2+) contacts are provided by glutamine 829, glutamate 841, and asparagine 843. The MGS-like domain maps to 951–1095 (GGLPLSGTVF…QDYAIAREAR (145 aa)). The allosteric domain stretch occupies residues 951 to 1096 (GGLPLSGTVF…DYAIAREARR (146 aa)).

It belongs to the CarB family. In terms of assembly, composed of two chains; the small (or glutamine) chain promotes the hydrolysis of glutamine to ammonia, which is used by the large (or ammonia) chain to synthesize carbamoyl phosphate. Tetramer of heterodimers (alpha,beta)4. It depends on Mg(2+) as a cofactor. Mn(2+) serves as cofactor.

It catalyses the reaction hydrogencarbonate + L-glutamine + 2 ATP + H2O = carbamoyl phosphate + L-glutamate + 2 ADP + phosphate + 2 H(+). It carries out the reaction hydrogencarbonate + NH4(+) + 2 ATP = carbamoyl phosphate + 2 ADP + phosphate + 2 H(+). It functions in the pathway amino-acid biosynthesis; L-arginine biosynthesis; carbamoyl phosphate from bicarbonate: step 1/1. The protein operates within pyrimidine metabolism; UMP biosynthesis via de novo pathway; (S)-dihydroorotate from bicarbonate: step 1/3. Large subunit of the glutamine-dependent carbamoyl phosphate synthetase (CPSase). CPSase catalyzes the formation of carbamoyl phosphate from the ammonia moiety of glutamine, carbonate, and phosphate donated by ATP, constituting the first step of 2 biosynthetic pathways, one leading to arginine and/or urea and the other to pyrimidine nucleotides. The large subunit (synthetase) binds the substrates ammonia (free or transferred from glutamine from the small subunit), hydrogencarbonate and ATP and carries out an ATP-coupled ligase reaction, activating hydrogencarbonate by forming carboxy phosphate which reacts with ammonia to form carbamoyl phosphate. This Clavibacter sepedonicus (Clavibacter michiganensis subsp. sepedonicus) protein is Carbamoyl phosphate synthase large chain.